Reading from the N-terminus, the 168-residue chain is Endoribonuclease YbeY (168 aa).

3 residues coordinate Zn(2+): His125, His129, and His135.

The protein belongs to the endoribonuclease YbeY family. The cofactor is Zn(2+).

It localises to the cytoplasm. Functionally, single strand-specific metallo-endoribonuclease involved in late-stage 70S ribosome quality control and in maturation of the 3' terminus of the 16S rRNA. The chain is Endoribonuclease YbeY from Rhodopseudomonas palustris (strain BisB18).